Here is a 398-residue protein sequence, read N- to C-terminus: S-adenosylmethionine synthase (398 aa).

An ATP-binding site is contributed by H17. D19 serves as a coordination point for Mg(2+). E45 contacts K(+). E58 and Q101 together coordinate L-methionine. The flexible loop stretch occupies residues Q101–T111. Residues D176 to K178, R243 to F244, D252, R258 to K259, and K279 each bind ATP. Residue D252 participates in L-methionine binding. K283 is a binding site for L-methionine.

This sequence belongs to the AdoMet synthase family. In terms of assembly, homotetramer; dimer of dimers. Mg(2+) is required as a cofactor. The cofactor is K(+).

The protein localises to the cytoplasm. It catalyses the reaction L-methionine + ATP + H2O = S-adenosyl-L-methionine + phosphate + diphosphate. Its pathway is amino-acid biosynthesis; S-adenosyl-L-methionine biosynthesis; S-adenosyl-L-methionine from L-methionine: step 1/1. Functionally, catalyzes the formation of S-adenosylmethionine (AdoMet) from methionine and ATP. The overall synthetic reaction is composed of two sequential steps, AdoMet formation and the subsequent tripolyphosphate hydrolysis which occurs prior to release of AdoMet from the enzyme. The chain is S-adenosylmethionine synthase from Staphylococcus saprophyticus subsp. saprophyticus (strain ATCC 15305 / DSM 20229 / NCIMB 8711 / NCTC 7292 / S-41).